The primary structure comprises 688 residues: DNA ligase (688 aa).

Residues 51-55, 100-101, and E129 contribute to the NAD(+) site; these read DSEYD and SL. Residue K131 is the N6-AMP-lysine intermediate of the active site. Residues R152, E189, K308, and K332 each contribute to the NAD(+) site. C426, C429, C444, and C450 together coordinate Zn(2+). The 80-residue stretch at 609–688 folds into the BRCT domain; the sequence is ADEQPLKGQT…DELLALLANS (80 aa).

Belongs to the NAD-dependent DNA ligase family. LigA subfamily. Mg(2+) is required as a cofactor. It depends on Mn(2+) as a cofactor.

The enzyme catalyses NAD(+) + (deoxyribonucleotide)n-3'-hydroxyl + 5'-phospho-(deoxyribonucleotide)m = (deoxyribonucleotide)n+m + AMP + beta-nicotinamide D-nucleotide.. Functionally, DNA ligase that catalyzes the formation of phosphodiester linkages between 5'-phosphoryl and 3'-hydroxyl groups in double-stranded DNA using NAD as a coenzyme and as the energy source for the reaction. It is essential for DNA replication and repair of damaged DNA. The protein is DNA ligase of Shewanella sp. (strain MR-4).